Consider the following 782-residue polypeptide: HHIP-like protein 1 (782 aa).

A signal peptide spans 1 to 19 (MARARAGALLALWVLGAAA). 4 cysteine pairs are disulfide-bonded: cysteine 181/cysteine 521, cysteine 185/cysteine 528, cysteine 399/cysteine 417, and cysteine 484/cysteine 584. Asparagine 234 is a glycosylation site (N-linked (GlcNAc...) asparagine). A disordered region spans residues 604–666 (EKFIPKTRST…RRGRLNSASR (63 aa)). The segment covering 610–623 (TRSTPRPTARAPTR) has biased composition (low complexity). Positions 632–642 (AAPPAPTPRPA) are enriched in pro residues. The SRCR domain occupies 673–776 (VRLVRPAGLS…HDEDAGVVCS (104 aa)). 3 cysteine pairs are disulfide-bonded: cysteine 700-cysteine 765, cysteine 713-cysteine 775, and cysteine 745-cysteine 755.

The protein belongs to the HHIP family.

The protein localises to the secreted. This Homo sapiens (Human) protein is HHIP-like protein 1 (HHIPL1).